The primary structure comprises 586 residues: Protein translocase subunit SecD (586 aa).

6 helical membrane-spanning segments follow: residues 7–27 (LILI…TLKW), 418–438 (SALA…LSGV), 439–459 (VAGF…LSAF), 465–485 (LTSI…NIVI), 521–541 (TFIA…GFAW), and 546–566 (GIVA…EFII).

This sequence belongs to the SecD/SecF family. SecD subfamily. As to quaternary structure, forms a complex with SecF. Part of the essential Sec protein translocation apparatus which comprises SecA, SecYEG and auxiliary proteins SecDF. Other proteins may also be involved.

The protein resides in the cell inner membrane. Part of the Sec protein translocase complex. Interacts with the SecYEG preprotein conducting channel. SecDF uses the proton motive force (PMF) to complete protein translocation after the ATP-dependent function of SecA. The polypeptide is Protein translocase subunit SecD (Borreliella burgdorferi (strain ATCC 35210 / DSM 4680 / CIP 102532 / B31) (Borrelia burgdorferi)).